The following is a 332-amino-acid chain: tRNA-dihydrouridine synthase B (332 aa).

Residues 16-18 and Gln70 contribute to the FMN site; that span reads PMA. The active-site Proton donor is Cys100. Residues Lys139, 200 to 202, and 224 to 225 each bind FMN; these read NGD and GR.

It belongs to the Dus family. DusB subfamily. FMN is required as a cofactor.

It carries out the reaction a 5,6-dihydrouridine in tRNA + NAD(+) = a uridine in tRNA + NADH + H(+). It catalyses the reaction a 5,6-dihydrouridine in tRNA + NADP(+) = a uridine in tRNA + NADPH + H(+). Catalyzes the synthesis of 5,6-dihydrouridine (D), a modified base found in the D-loop of most tRNAs, via the reduction of the C5-C6 double bond in target uridines. The protein is tRNA-dihydrouridine synthase B of Xanthomonas axonopodis pv. citri (strain 306).